The chain runs to 369 residues: Core-capsid bridging protein (369 aa).

Residues Ala15–Asp50 are disordered. Over residues Pro22–Pro31 the composition is skewed to basic and acidic residues. The segment covering Arg32–Lys41 has biased composition (basic residues). Position 85 is a phosphothreonine; by host (Thr85). Ser166 is subject to Phosphoserine; by host. The segment at Pro307–Ala342 is disordered. Positions Arg315–Gln338 are enriched in basic residues.

Belongs to the adenoviridae core-capsid bridging protein family. Monomer. Homodimer. Exists in equilibrium between monomers and dimers in solution. Interacts with the histone-like nucleoprotein; this interactions bridge the virus core to the capsid. Interacts with core protein X; this interactions bridge the virus core to the capsid. Interacts with the endosome lysis protein VI; this interactions bridge the virus core to the capsid. Interacts with the peripentonal hexons. Interacts with host NPM1; this interaction might play a role in virus assembly.

It localises to the virion. The protein localises to the host nucleus. The protein resides in the host nucleolus. Its function is as follows. Associates loosely with the viral DNA to form an outer shell around the nucleoprotein-DNA complex and links it with the capsid by binding the endosome lysis protein. Dissociates from the viral genome during entry. Might be involved in nuclear capsid assembly of the viral particles through its association with NPM1/nucleophosmin. This Homo sapiens (Human) protein is Core-capsid bridging protein.